We begin with the raw amino-acid sequence, 290 residues long: Porphobilinogen deaminase (290 aa).

Cysteine 237 is modified (S-(dipyrrolylmethanemethyl)cysteine).

It belongs to the HMBS family. Monomer. The cofactor is dipyrromethane.

The catalysed reaction is 4 porphobilinogen + H2O = hydroxymethylbilane + 4 NH4(+). It functions in the pathway porphyrin-containing compound metabolism; protoporphyrin-IX biosynthesis; coproporphyrinogen-III from 5-aminolevulinate: step 2/4. Functionally, tetrapolymerization of the monopyrrole PBG into the hydroxymethylbilane pre-uroporphyrinogen in several discrete steps. The sequence is that of Porphobilinogen deaminase from Clostridium botulinum (strain Loch Maree / Type A3).